We begin with the raw amino-acid sequence, 65 residues long: Large ribosomal subunit protein bL33m (65 aa).

The transit peptide at 1–8 (MFLTTANL) directs the protein to the mitochondrion.

It belongs to the bacterial ribosomal protein bL33 family. As to quaternary structure, component of the mitochondrial ribosome large subunit (39S) which comprises a 16S rRNA and about 50 distinct proteins.

The protein resides in the mitochondrion. The protein is Large ribosomal subunit protein bL33m (mrpl33) of Tetraodon nigroviridis (Spotted green pufferfish).